Here is a 102-residue protein sequence, read N- to C-terminus: FGSLLGVCLITQILTGLFLAMHYTADIYFAFSSVAHICRDVNYGWLIRNIHTNGASLFFICIYMHIGRGIYHGSFMLKETWNIGVILFLMTMATAFMGYVFP.

The next 3 membrane-spanning stretches (helical) occupy residues 1 to 21 (FGSL…FLAM), 45 to 66 (WLIR…YMHI), and 81 to 101 (WNIG…GYVF). The heme b site is built by H51 and H65.

The protein belongs to the cytochrome b family. In terms of assembly, the cytochrome bc1 complex contains 3 respiratory subunits (MT-CYB, CYC1 and UQCRFS1), 2 core proteins (UQCRC1 and UQCRC2) and probably 6 low-molecular weight proteins. It depends on heme b as a cofactor.

The protein localises to the mitochondrion inner membrane. Its function is as follows. Component of the ubiquinol-cytochrome c reductase complex (complex III or cytochrome b-c1 complex) that is part of the mitochondrial respiratory chain. The b-c1 complex mediates electron transfer from ubiquinol to cytochrome c. Contributes to the generation of a proton gradient across the mitochondrial membrane that is then used for ATP synthesis. The protein is Cytochrome b (mt-cyb) of Plethodon yonahlossee (Yonahlossee salamander).